Consider the following 241-residue polypeptide: Homeobox protein TGIF2LX (241 aa).

2 disordered regions span residues 1–58 (MEAA…GNLP) and 126–209 (TGKD…VSPE). Residues 21–39 (AKTQSPAQDTSIMSRNNAD) are compositionally biased toward polar residues. Positions 48–111 (EHKKKRKGNL…INARRRILPD (64 aa)) form a DNA-binding region, homeobox; TALE-type.

This sequence belongs to the TALE/TGIF homeobox family.

The protein localises to the nucleus. Its function is as follows. May have a transcription role in testis. In Gorilla gorilla gorilla (Western lowland gorilla), this protein is Homeobox protein TGIF2LX (TGIF2LX).